Here is a 355-residue protein sequence, read N- to C-terminus: 3-dehydroquinate synthase (355 aa).

Residues 71 to 76 (EGEERK), 105 to 109 (GVVGD), 129 to 130 (TS), lysine 142, and lysine 151 each bind NAD(+). 3 residues coordinate Zn(2+): glutamate 184, histidine 246, and histidine 263.

The protein belongs to the sugar phosphate cyclases superfamily. Dehydroquinate synthase family. It depends on NAD(+) as a cofactor. The cofactor is Co(2+). Zn(2+) serves as cofactor.

The protein localises to the cytoplasm. The catalysed reaction is 7-phospho-2-dehydro-3-deoxy-D-arabino-heptonate = 3-dehydroquinate + phosphate. It functions in the pathway metabolic intermediate biosynthesis; chorismate biosynthesis; chorismate from D-erythrose 4-phosphate and phosphoenolpyruvate: step 2/7. Its function is as follows. Catalyzes the conversion of 3-deoxy-D-arabino-heptulosonate 7-phosphate (DAHP) to dehydroquinate (DHQ). This Streptococcus pneumoniae serotype 4 (strain ATCC BAA-334 / TIGR4) protein is 3-dehydroquinate synthase.